Consider the following 387-residue polypeptide: Acetylserotonin O-methyltransferase (387 aa).

Residues Tyr153, Trp170, Glu216, 246-248 (GDF), and Arg263 contribute to the S-adenosyl-L-methionine site. The Proton donor/acceptor role is filled by His266. Residues Asp267 and Gln317 each contribute to the substrate site. Residues 355–387 (ARGGGAGARSDGGGGEATSQTGSGTGREVGAQD) form a disordered region. The segment covering 356–370 (RGGGAGARSDGGGGE) has biased composition (gly residues).

Belongs to the class I-like SAM-binding methyltransferase superfamily. Cation-independent O-methyltransferase family. As to quaternary structure, homodimer.

It carries out the reaction N-acetylserotonin + S-adenosyl-L-methionine = melatonin + S-adenosyl-L-homocysteine + H(+). It functions in the pathway aromatic compound metabolism; melatonin biosynthesis; melatonin from serotonin: step 1/2. In terms of biological role, catalyzes the transfer of a methyl group onto N-acetylserotonin, producing melatonin (N-acetyl-5-methoxytryptamine). The polypeptide is Acetylserotonin O-methyltransferase (Asmt) (Mus musculus molossinus (Japanese house mouse)).